The sequence spans 123 residues: Large ribosomal subunit protein eL8 (123 aa).

This sequence belongs to the eukaryotic ribosomal protein eL8 family. Part of the 50S ribosomal subunit. Probably part of the RNase P complex.

It is found in the cytoplasm. Multifunctional RNA-binding protein that recognizes the K-turn motif in ribosomal RNA, the RNA component of RNase P, box H/ACA, box C/D and box C'/D' sRNAs. This is Large ribosomal subunit protein eL8 from Methanobrevibacter smithii (strain ATCC 35061 / DSM 861 / OCM 144 / PS).